Reading from the N-terminus, the 512-residue chain is Kynurenine 3-monooxygenase (512 aa).

Belongs to the aromatic-ring hydroxylase family. KMO subfamily. It depends on FAD as a cofactor.

It localises to the mitochondrion outer membrane. The enzyme catalyses L-kynurenine + NADPH + O2 + H(+) = 3-hydroxy-L-kynurenine + NADP(+) + H2O. It functions in the pathway cofactor biosynthesis; NAD(+) biosynthesis; quinolinate from L-kynurenine: step 1/3. In terms of biological role, catalyzes the hydroxylation of L-kynurenine (L-Kyn) to form 3-hydroxy-L-kynurenine (L-3OHKyn). Required for synthesis of quinolinic acid. The sequence is that of Kynurenine 3-monooxygenase (bna4) from Aspergillus fumigatus (strain ATCC MYA-4609 / CBS 101355 / FGSC A1100 / Af293) (Neosartorya fumigata).